A 374-amino-acid chain; its full sequence is Serine/threonine-protein kinase-transforming protein mos (374 aa).

Residues 94 to 370 enclose the Protein kinase domain; it reads VCLMHRLGSG…LLQRDLKAFR (277 aa). ATP is bound by residues 100 to 108 and K121; that span reads LGSGGFGSV. The active-site Proton acceptor is D229.

The protein belongs to the protein kinase superfamily. Ser/Thr protein kinase family.

The enzyme catalyses L-seryl-[protein] + ATP = O-phospho-L-seryl-[protein] + ADP + H(+). It catalyses the reaction L-threonyl-[protein] + ATP = O-phospho-L-threonyl-[protein] + ADP + H(+). The chain is Serine/threonine-protein kinase-transforming protein mos (V-MOS) from Mus musculus (Mouse).